Consider the following 130-residue polypeptide: Small ribosomal subunit protein uS8 (130 aa).

Belongs to the universal ribosomal protein uS8 family. As to quaternary structure, part of the 30S ribosomal subunit. Contacts proteins S5 and S12.

Functionally, one of the primary rRNA binding proteins, it binds directly to 16S rRNA central domain where it helps coordinate assembly of the platform of the 30S subunit. The chain is Small ribosomal subunit protein uS8 from Shewanella sediminis (strain HAW-EB3).